A 597-amino-acid chain; its full sequence is Dictomallein-3 (597 aa).

The signal sequence occupies residues 1 to 19; the sequence is MKLILILIFLFSCILFINC. A Peptidase M66 domain is found at 148-409; it reads PDVGQDYTLK…QNYFKNSIYY (262 aa). Position 301 (H301) interacts with Zn(2+). E302 is an active-site residue. Zn(2+)-binding residues include H305 and H311.

It belongs to the dictomallein family. Zn(2+) is required as a cofactor.

The protein localises to the secreted. The protein is Dictomallein-3 (dtmlC) of Dictyostelium discoideum (Social amoeba).